Reading from the N-terminus, the 720-residue chain is DNA replication licensing factor mcm7 (720 aa).

The C4-type zinc finger occupies 183-210; sequence CDQCGAETYQPIQSPTFMPLIMCPSREC. The 207-residue stretch at 331 to 537 folds into the MCM domain; the sequence is FYEKLAASIA…NDLRLAQHIT (207 aa). Residues Tyr344, Gly383, Ala385, Lys386, Ser387, Asn488, Arg513, and Arg603 each coordinate ATP. The Arginine finger signature appears at 512–515; the sequence is SRFD.

It belongs to the MCM family. As to quaternary structure, component of the mcm2-7 complex (RLF-M). The complex forms a toroidal hexameric ring with the proposed subunit order mcm2-mcm6-mcm4-mcm7-mcm3-mcm5. The heterodimer of mmcm3/mcm5 interacts with mcm4, mmcm6, mcm7 and weakly with mcm2. The N-terminus is required for interaction with mmcm3, though this interaction may not be direct, and remains in a complex with mmcm3 throughout the cell cycle. Begins to associate with zmcm6 at the neurula stage. Component of the replisome complex. Component of the CMG helicase complex, composed of the mcm2-7 complex, the GINS complex and cdc45. In terms of processing, ubiquitinated by traip when forks converge following formation of DNA interstrand cross-links. Short ubiquitin chains on mcm7 promote recruitment of DNA glycosylase neil3. If the interstrand cross-link cannot be cleaved by neil3, the ubiquitin chains continue to grow on mcm7, promoting the unloading of the CMG helicase complex by the vcp/p97 ATPase.

It localises to the nucleus. Its subcellular location is the chromosome. It catalyses the reaction ATP + H2O = ADP + phosphate + H(+). Its function is as follows. Acts as a component of the mcm2-7 complex (mcm complex) which is the putative replicative helicase essential for 'once per cell cycle' DNA replication initiation and elongation in eukaryotic cells. The active ATPase sites in the mcm2-7 ring are formed through the interaction surfaces of two neighboring subunits such that a critical structure of a conserved arginine finger motif is provided in trans relative to the ATP-binding site of the Walker A box of the adjacent subunit. The six ATPase active sites, however, are likely to contribute differentially to the complex helicase activity. The existence of maternal and zygotic forms of mcm3 and mcm6 suggests that specific forms of mcm2-7 complexes may be used during different stages of development. The sequence is that of DNA replication licensing factor mcm7 from Xenopus tropicalis (Western clawed frog).